A 401-amino-acid chain; its full sequence is L-rhamnonate dehydratase (401 aa).

Residues His-29 and Arg-55 each contribute to the substrate site. Residues Asp-222, Glu-248, and Glu-276 each contribute to the Mg(2+) site. His-325 functions as the Proton acceptor in the catalytic mechanism. Glu-345 contacts substrate.

It belongs to the mandelate racemase/muconate lactonizing enzyme family. RhamD subfamily. Homooctamer; tetramer of dimers. Requires Mg(2+) as cofactor.

It carries out the reaction L-rhamnonate = 2-dehydro-3-deoxy-L-rhamnonate + H2O. In terms of biological role, catalyzes the dehydration of L-rhamnonate to 2-keto-3-deoxy-L-rhamnonate (KDR). The sequence is that of L-rhamnonate dehydratase from Salmonella heidelberg (strain SL476).